A 101-amino-acid polypeptide reads, in one-letter code: Ferredoxin-3 (101 aa).

4Fe-4S ferredoxin-type domains lie at 17–46 (YLMK…LHGL) and 70–100 (KVMA…HAAL). Residues Cys-26, Cys-29, Cys-32, Cys-36, Cys-80, Cys-83, Cys-86, and Cys-90 each contribute to the [4Fe-4S] cluster site.

In terms of assembly, homodimer. [4Fe-4S] cluster is required as a cofactor.

Functionally, ferredoxins are iron-sulfur proteins that transfer electrons in a wide variety of metabolic reactions. This chain is Ferredoxin-3 (fdxB), found in Rhodobacter capsulatus (Rhodopseudomonas capsulata).